Here is a 551-residue protein sequence, read N- to C-terminus: Protein GZF3 (551 aa).

Residues 17–43 (DNVFEPKSSENLNSLNQSEEEGHIGRW) are disordered. The GATA-type zinc finger occupies 131 to 155 (CKNCLTSTTPLWRRDEHGAMLCNAC). Disordered stretches follow at residues 212 to 260 (GRKA…SATK), 379 to 400 (LAPT…QIRS), and 467 to 490 (SISN…AKDL). Residues 228–239 (SQLLMGTSSTAK) show a composition bias toward polar residues. Residues 244–254 (PKTESKERSDS) are compositionally biased toward basic and acidic residues. Positions 388-400 (DSNPSEVPNQIRS) are enriched in polar residues. Over residues 467 to 477 (SISNSVSSSDV) the composition is skewed to low complexity. Residues 478 to 490 (SGRKFENHPAKDL) show a composition bias toward basic and acidic residues.

It localises to the nucleus. The sequence is that of Protein GZF3 (GZF3) from Saccharomyces cerevisiae (strain ATCC 204508 / S288c) (Baker's yeast).